The chain runs to 596 residues: MRQRTPFARPGLLASAALALVLGPLAVAAQEQAAPPKDPAAALEDHKTKTDNRYEPSLDNLAQQDVAALGAPEGIPALSDAQYNEANKIYFERCAGCHGVLRKGATGKALTPDLTRDLGFDYLQSFITYGSPAGMPNWGTSGELTAEQVDLMANYLLLDPAAPPEFGMKEMRESWQVHVAPEDRPTQQENDWDLENLFSVTLRDAGQIALIDGTTYEIKSVLDTGYAVHISRMSASGRYLFVIGRDGKVNMIDLWMKEPATVAEIKIGSEARSIETSKMEGWEDKYAIAGAYWPPQYVIMDGETLEPMKIQSTRGMIYDEQEYHPEPRVAAILASHYRPEFIVNVKETGKILLVDYTDLKNLKTTEIEAERFLHDGGLDGSHRYFITAANARNKLVVIDTKEGKLVAIEDTGGQTPHPGRGANFVHPTFGPVWATSHMGDDSVALIGTDPEGHPDNAWKILDSFPALGGGSLFIKTHPNSQYLYVDATLNPEAEISGSVAVFDTKAMTGDGSDPEFKTLPIAEWAGIAEGQPRVVQGEFNKDGTEVWFSVWNGKDQESALVVVDDKTLELKHVIKDERLVTPTGKFNVYNTMTDTY.

The signal sequence occupies residues 1 to 29 (MRQRTPFARPGLLASAALALVLGPLAVAA). The interval 30-76 (QEQAAPPKDPAAALEDHKTKTDNRYEPSLDNLAQQDVAALGAPEGIP) is N-terminal tail. H46 contacts heme c. Heme d1-binding residues include Y54 and S57. The region spanning 77 to 162 (ALSDAQYNEA…ANYLLLDPAA (86 aa)) is the Cytochrome c domain. Residues C94, C97, H98, K108, and Y122 each contribute to the heme c site. Residues W138, R203, H229, R232, R245, R272, Y292, R420, Q536, and T583 each contribute to the heme d1 site. The D1-heme domain stretch occupies residues 163–596 (PPEFGMKEMR…NVYNTMTDTY (434 aa)).

In terms of assembly, homodimer. Heme c is required as a cofactor. It depends on heme as a cofactor.

The protein resides in the periplasm. The enzyme catalyses nitric oxide + Fe(III)-[cytochrome c] + H2O = Fe(II)-[cytochrome c] + nitrite + 2 H(+). The catalysed reaction is A + NH4(+) + H2O = hydroxylamine + AH2 + H(+). Its function is as follows. Inactivation of this cytochrome oxidase results in the loss of nitrite and nitric oxide reductase activities, but not of nitrous oxide reductase activity. The polypeptide is Nitrite reductase (nirS) (Paracoccus denitrificans (strain Pd 1222)).